The primary structure comprises 263 residues: 4-hydroxy-2-oxo-heptane-1,7-dioate aldolase (263 aa).

The Proton acceptor role is filled by H45. Q147 contributes to the substrate binding site. E149 provides a ligand contact to a divalent metal cation. Substrate contacts are provided by A174 and D175. An a divalent metal cation-binding site is contributed by D175.

It belongs to the HpcH/HpaI aldolase family. In terms of assembly, homohexamer; trimer of dimers. The cofactor is a divalent metal cation.

The enzyme catalyses 4-hydroxy-2-oxoheptanedioate = succinate semialdehyde + pyruvate. Its pathway is aromatic compound metabolism; 4-hydroxyphenylacetate degradation; pyruvate and succinate semialdehyde from 4-hydroxyphenylacetate: step 7/7. Functionally, catalyzes the reversible retro-aldol cleavage of 4-hydroxy-2-ketoheptane-1,7-dioate (HKHD) to pyruvate and succinic semialdehyde. The sequence is that of 4-hydroxy-2-oxo-heptane-1,7-dioate aldolase from Salmonella paratyphi A (strain ATCC 9150 / SARB42).